The primary structure comprises 34 residues: Histone H1, sperm (34 aa).

Positions 1–34 are disordered; the sequence is PASPQKRAASPRRSPKKSPRKSPKKSPRKRSASP. A compositionally biased stretch (basic residues) spans 9-34; sequence ASPRRSPKKSPRKSPKKSPRKRSASP.

The protein belongs to the histone H1/H5 family. In terms of tissue distribution, sperm.

It localises to the nucleus. The protein localises to the chromosome. In terms of biological role, histones H1 are necessary for the condensation of nucleosome chains into higher-order structures. This Strongylocentrotus purpuratus (Purple sea urchin) protein is Histone H1, sperm.